The primary structure comprises 430 residues: Enolase (430 aa).

Residue Gln164 coordinates (2R)-2-phosphoglycerate. Catalysis depends on Glu206, which acts as the Proton donor. The Mg(2+) site is built by Asp243, Glu288, and Asp315. (2R)-2-phosphoglycerate-binding residues include Lys340, Arg369, Ser370, and Lys391. Residue Lys340 is the Proton acceptor of the active site.

This sequence belongs to the enolase family. It depends on Mg(2+) as a cofactor.

It is found in the cytoplasm. It localises to the secreted. The protein resides in the cell surface. It catalyses the reaction (2R)-2-phosphoglycerate = phosphoenolpyruvate + H2O. The protein operates within carbohydrate degradation; glycolysis; pyruvate from D-glyceraldehyde 3-phosphate: step 4/5. Its function is as follows. Catalyzes the reversible conversion of 2-phosphoglycerate (2-PG) into phosphoenolpyruvate (PEP). It is essential for the degradation of carbohydrates via glycolysis. This is Enolase from Lysinibacillus sphaericus (strain C3-41).